The primary structure comprises 419 residues: Ribosome biogenesis protein WDR12 homolog (419 aa).

Residues 10 to 91 (VQVHLKTKQE…EDSIEIEYVE (82 aa)) form a ubiquitin-like (UBL) domain region. 7 WD repeats span residues 103 to 140 (LHDD…KLTI), 142 to 184 (GHTA…NAVE), 191 to 230 (GHER…AGES), 249 to 287 (GHRE…IKTE), 289 to 328 (STNK…GSVV), 334 to 374 (GHNA…APLY), and 378 to 416 (GHGE…VENM).

Belongs to the WD repeat WDR12/YTM1 family.

It localises to the nucleus. It is found in the nucleolus. The protein resides in the nucleoplasm. Its function is as follows. Required for maturation of ribosomal RNAs and formation of the large ribosomal subunit. This Drosophila mojavensis (Fruit fly) protein is Ribosome biogenesis protein WDR12 homolog.